The sequence spans 727 residues: Plakophilin-1 (727 aa).

The segment at 1 to 235 is required for binding to single stranded DNA; sequence MNHSPLKTAL…SFSHSRASSK (235 aa). The segment at 1–287 is required for interaction with EIF4A1; that stretch reads MNHSPLKTAL…ESAKQQVYQL (287 aa). At Ser4 the chain carries Phosphoserine. Positions 48–69 are disordered; the sequence is TVKRQKSKSSQSSTLSHSNRGS. Phosphorylation in this region is required for cytoplasmic localization and protein stabilization stretches follow at residues 54–69 and 117–192; these read SKSS…NRGS and RFSS…STCS. 4 positions are modified to phosphoserine: Ser119, Ser120, Ser122, and Ser143. The segment at 161–270 is required for WNT-mediated nuclear localization; sequence YCDPRGTLRK…KCQAIGAYYI (110 aa). 9 ARM repeats span residues 244 to 275, 276 to 317, 318 to 360, 361 to 412, 413 to 443, 505 to 536, 537 to 583, 584 to 629, and 630 to 693; these read SGLT…HTCF, QDES…NLVF, RSTT…NLSS, TDEL…GCLR, NLSS…NCVA, NYDC…LNLM, GKSK…IARL, LQSG…SHTG, and NTSN…DMWS.

This sequence belongs to the beta-catenin family. In terms of assembly, part of a complex that contains DSG3, PKP1, YAP1 and YWHAG; the complex is required for localization of DSG3 and YAP1 to the cell membrane in keratinocytes. Interacts (via N-terminus) with KRT5/CK5, KRT8/CK8 (via rod domain), KRT15/CK15 and KRT18/CK18 (via rod domain) as part of intermediate filaments. Interacts with VIM (via rod domain). Interacts with DSP. Interacts with DES. Interacts with FXR1; the interaction may facilitate the binding of PKP1 to PKP2, PKP3 and DSP mRNA. Interacts (via N-terminus) with EIF4A1; the interaction promotes EIF4A1 recruitment to the cap-dependent translation complex and EIF4A1 ATPase activity. Interacts with TJP1/ZO-1; the interaction facilitates TJP1/ZO-1 localization to the plasma membrane. Interacts (when phosphorylated) with YWHAG; the interaction results in translocation of PKP1 to the cytoplasm and loss of intercellular adhesion in keratinocytes. Post-translationally, phosphorylated by AKT2; required for interaction with YWHAG and subsequent localization away from desmosomes to the cytoplasm. Phosphorylation of Ser-119 by AKT2 promotes PKP1-driven cap-dependent mRNA translation and decreases intercellular adhesion, phosphorylation is promoted by insulin. Phosphorylation by RIPK4 at the N-terminus is required for its role in differentiation of keratinocytes and DSG1 localization at cell junctions.

It localises to the nucleus. The protein localises to the cytoplasm. Its subcellular location is the perinuclear region. It is found in the cell junction. The protein resides in the desmosome. It localises to the cell membrane. The protein localises to the stress granule. Functionally, a component of desmosome cell-cell junctions which are required for positive regulation of cellular adhesion. Plays a role in desmosome protein expression regulation and localization to the desmosomal plaque, thereby maintaining cell sheet integrity and anchorage of desmosomes to intermediate filaments. Required for localization of DSG3 and YAP1 to the cell membrane in keratinocytes in response to mechanical strain, via the formation of an interaction complex composed of DSG3, YAP1, PKP1 and YWHAG. Positively regulates differentiation of keratinocytes, potentially via promoting localization of DSG1 at desmosome cell junctions. Required for calcium-independent development and maturation of desmosome plaques specifically at lateral cell-cell contacts in differentiating keratinocytes. Plays a role in the maintenance of DSG3 protein abundance, DSG3 clustering and localization of these clusters to the cell membrane in keratinocytes. May also promote keratinocyte proliferation and morphogenesis during postnatal development. Required for tight junction inside-out transepidermal barrier function of the skin. Promotes Wnt-mediated proliferation and differentiation of ameloblasts, via facilitating TJP1/ZO-1 localization to tight junctions. Binds single-stranded DNA (ssDNA), and may thereby play a role in sensing DNA damage and promoting cell survival. Positively regulates cap-dependent translation and as a result cell proliferation, via recruitment of EIF4A1 to the initiation complex and promotion of EIF4A1 ATPase activity. Regulates the mRNA stability and protein abundance of desmosome components PKP2, PKP3, DSC2 and DSP, potentially via its interaction with FXR1. May facilitate the formation of intermediate filaments. This chain is Plakophilin-1 (PKP1), found in Bos taurus (Bovine).